An 87-amino-acid chain; its full sequence is Cell division topological specificity factor (87 aa).

This sequence belongs to the MinE family.

In terms of biological role, prevents the cell division inhibition by proteins MinC and MinD at internal division sites while permitting inhibition at polar sites. This ensures cell division at the proper site by restricting the formation of a division septum at the midpoint of the long axis of the cell. The polypeptide is Cell division topological specificity factor (Neisseria meningitidis serogroup C (strain 053442)).